Here is a 274-residue protein sequence, read N- to C-terminus: Pyrroline-5-carboxylate reductase 3 (274 aa).

Ala-2 is subject to N-acetylalanine.

The protein belongs to the pyrroline-5-carboxylate reductase family. In terms of assembly, homodecamer; composed of 5 homodimers.

It localises to the cytoplasm. The catalysed reaction is L-proline + NADP(+) = (S)-1-pyrroline-5-carboxylate + NADPH + 2 H(+). It carries out the reaction L-proline + NAD(+) = (S)-1-pyrroline-5-carboxylate + NADH + 2 H(+). Its pathway is amino-acid biosynthesis; L-proline biosynthesis; L-proline from L-glutamate 5-semialdehyde: step 1/1. Oxidoreductase that catalyzes the last step in proline biosynthesis, which corresponds to the reduction of pyrroline-5-carboxylate (P5C) to L-proline using NAD(P)H. Proline is synthesized from either glutamate or ornithine; both are converted to P5C, and then to proline via pyrroline-5-carboxylate reductases (PYCRs). PYCR3 is exclusively linked to the biosynthesis of proline from ornithine. This chain is Pyrroline-5-carboxylate reductase 3, found in Rattus norvegicus (Rat).